Reading from the N-terminus, the 491-residue chain is Probable allantoate deiminase (491 aa).

The first 32 residues, 1–32 (MALLLSYPRRHPSIHLLILSAYALFLLPILDG), serve as a signal peptide directing secretion. The N-linked (GlcNAc...) asparagine glycan is linked to asparagine 109. Residues histidine 120, aspartate 131, glutamate 168, and histidine 234 each contribute to the Mn(2+) site. N-linked (GlcNAc...) asparagine glycans are attached at residues asparagine 265 and asparagine 343. Histidine 454 provides a ligand contact to Mn(2+).

This sequence belongs to the peptidase M20A family. As to quaternary structure, homodimer. The cofactor is Mn(2+).

It localises to the endoplasmic reticulum. It carries out the reaction allantoate + H2O + 2 H(+) = (S)-2-ureidoglycine + NH4(+) + CO2. Functionally, involved in the catabolism of purine nucleotides. The sequential activity of AAH, UGLYAH and UAH allows a complete purine breakdown without the intermediate generation of urea. In Oryza sativa subsp. japonica (Rice), this protein is Probable allantoate deiminase.